Consider the following 180-residue polypeptide: GTP cyclohydrolase 1 (180 aa).

Zn(2+) is bound by residues cysteine 71, histidine 74, and cysteine 142.

It belongs to the GTP cyclohydrolase I family. As to quaternary structure, toroid-shaped homodecamer, composed of two pentamers of five dimers.

The catalysed reaction is GTP + H2O = 7,8-dihydroneopterin 3'-triphosphate + formate + H(+). The protein operates within cofactor biosynthesis; 7,8-dihydroneopterin triphosphate biosynthesis; 7,8-dihydroneopterin triphosphate from GTP: step 1/1. The sequence is that of GTP cyclohydrolase 1 (folE) from Helicobacter pylori (strain ATCC 700392 / 26695) (Campylobacter pylori).